A 1122-amino-acid chain; its full sequence is Breast carcinoma-amplified sequence 3 homolog (1122 aa).

Residues 1 to 41 form a disordered region; that stretch reads MSADSPRRHPSGVVGSGIGLGSGSGTGLGSGSTGGSKSGAA. Gly residues predominate over residues 14–37; it reads VGSGIGLGSGSGTGLGSGSTGGSK. Ser55 carries the post-translational modification Phosphoserine. Low complexity-rich tracts occupy residues 357–377, 626–641, 966–987, and 1036–1051; these read GTTAGSGASSKSSSFDSASGG, GSNSQRQRQRLSSLSD, TKDNASPNPNTNTNPNAIPSSN, and LSLEGPPSQSSPPLSL. 5 disordered regions span residues 357–382, 620–644, 966–990, 1033–1054, and 1071–1122; these read GTTAGSGASSKSSSFDSASGGPDAKQ, GVGVGVGSNSQRQRQRLSSLSDDSG, TKDNASPNPNTNTNPNAIPSSNKVQ, NSRLSLEGPPSQSSPPLSLTNG, and GVAQ…RRNL. Position 638 is a phosphoserine (Ser638). Acidic residues predominate over residues 1087 to 1112; sequence VDDDDEEEEEEEEELDEEAEPDDDER. The segment covering 1113-1122 has biased composition (basic and acidic residues); the sequence is EDRPLGRRNL.

It belongs to the BCAS3 family. As to expression, expressed in all postembryonic pericardial cells, but not in cardioblasts. Also expressed in Garland cells in third instar larvae (at protein level).

It is found in the cytoplasm. In terms of biological role, regulates macropinocytosis in pericardial cells. The protein is Breast carcinoma-amplified sequence 3 homolog (rudhira) of Drosophila melanogaster (Fruit fly).